A 208-amino-acid polypeptide reads, in one-letter code: Uracil phosphoribosyltransferase (208 aa).

5-phospho-alpha-D-ribose 1-diphosphate contacts are provided by residues arginine 78, arginine 103, and 130–138 (DPMLATGGS). Residues isoleucine 193 and 198 to 200 (GDA) contribute to the uracil site. Aspartate 199 lines the 5-phospho-alpha-D-ribose 1-diphosphate pocket.

This sequence belongs to the UPRTase family. Mg(2+) is required as a cofactor.

The catalysed reaction is UMP + diphosphate = 5-phospho-alpha-D-ribose 1-diphosphate + uracil. Its pathway is pyrimidine metabolism; UMP biosynthesis via salvage pathway; UMP from uracil: step 1/1. With respect to regulation, allosterically activated by GTP. Functionally, catalyzes the conversion of uracil and 5-phospho-alpha-D-ribose 1-diphosphate (PRPP) to UMP and diphosphate. The sequence is that of Uracil phosphoribosyltransferase from Shewanella oneidensis (strain ATCC 700550 / JCM 31522 / CIP 106686 / LMG 19005 / NCIMB 14063 / MR-1).